Here is a 352-residue protein sequence, read N- to C-terminus: Pre-rRNA-processing protein ipi1 (352 aa).

The protein belongs to the IPI1/TEX10 family. Component of the RIX1 complex, composed of rrm-9/ipi1, rix1/ipi2 and ipi3 in a 1:2:2 stoichiometry. The complex interacts (via rix1) with mdn1 (via its hexameric AAA ATPase ring) and the pre-60S ribosome particles.

The protein resides in the nucleus. In terms of biological role, component of the RIX1 complex required for processing of ITS2 sequences from 35S pre-rRNA. The chain is Pre-rRNA-processing protein ipi1 (rrm-9) from Neurospora crassa (strain ATCC 24698 / 74-OR23-1A / CBS 708.71 / DSM 1257 / FGSC 987).